A 448-amino-acid chain; its full sequence is Adenylosuccinate synthetase (448 aa).

Residues 36–42 (GDEGKGK) and 64–66 (GHT) each bind GTP. Catalysis depends on D37, which acts as the Proton acceptor. Positions 37 and 64 each coordinate Mg(2+). IMP-binding positions include 37–40 (DEGK), 62–65 (NAGH), T154, R168, N246, T261, and R325. Catalysis depends on H65, which acts as the Proton donor. 321-327 (VTTKRKR) serves as a coordination point for substrate. Residues R327, 353–355 (KLD), and 436–438 (GVG) contribute to the GTP site.

This sequence belongs to the adenylosuccinate synthetase family. Homodimer. It depends on Mg(2+) as a cofactor.

Its subcellular location is the cytoplasm. The catalysed reaction is IMP + L-aspartate + GTP = N(6)-(1,2-dicarboxyethyl)-AMP + GDP + phosphate + 2 H(+). It functions in the pathway purine metabolism; AMP biosynthesis via de novo pathway; AMP from IMP: step 1/2. Its function is as follows. Plays an important role in the de novo pathway and in the salvage pathway of purine nucleotide biosynthesis. Catalyzes the first committed step in the biosynthesis of AMP from IMP. The chain is Adenylosuccinate synthetase from Drosophila pseudoobscura pseudoobscura (Fruit fly).